Consider the following 291-residue polypeptide: Nucleotide-binding protein LMHCC_0126 (291 aa).

13-20 (GMSGAGKT) is a binding site for ATP. 63 to 66 (DLRG) provides a ligand contact to GTP.

It belongs to the RapZ-like family.

Displays ATPase and GTPase activities. The chain is Nucleotide-binding protein LMHCC_0126 from Listeria monocytogenes serotype 4a (strain HCC23).